We begin with the raw amino-acid sequence, 722 residues long: A-type ATP synthase subunit I (722 aa).

Residues 309-321 (DYKPTGHDQHVPA) are compositionally biased toward basic and acidic residues. The segment at 309–352 (DYKPTGHDQHVPADDGADAATDGGTTASFDETDSPPVIQDNPGP) is disordered. Positions 326 to 335 (DAATDGGTTA) are enriched in low complexity. 8 helical membrane passes run 384 to 404 (FYGF…LGFW), 419 to 439 (GVAM…GEVF), 474 to 494 (LAAS…FGFV), 505 to 525 (AALE…WLFS), 554 to 574 (LAAA…AGFL), 590 to 610 (IAAV…LVFG), 639 to 659 (FMLF…MHMG), and 662 to 682 (GILI…ALGV).

This sequence belongs to the V-ATPase 116 kDa subunit family. In terms of assembly, has multiple subunits with at least A(3), B(3), C, D, E, F, H, I and proteolipid K(x).

The protein localises to the cell membrane. Functionally, component of the A-type ATP synthase that produces ATP from ADP in the presence of a proton gradient across the membrane. This chain is A-type ATP synthase subunit I, found in Halobacterium salinarum (strain ATCC 700922 / JCM 11081 / NRC-1) (Halobacterium halobium).